Here is a 945-residue protein sequence, read N- to C-terminus: Collagen-like protein 1 (945 aa).

Disordered regions lie at residues 80–226 (SLKG…SPDL) and 257–441 (GEKG…DKGE). Collagen-like domains lie at 83–142 (GDPG…QGDK) and 146–205 (GDVG…KGDK). Basic and acidic residues-rich tracts occupy residues 109–145 (QGTK…KGDQ) and 168–208 (DQGD…KGDK). Residue N211 is glycosylated (N-linked (GlcNAc...) asparagine; by host). 5 consecutive Collagen-like domains span residues 257–376 (GEKG…KGDK), 383–442 (GDKG…KGEN), 488–547 (GEKG…VGDK), 554–613 (GDKG…KGDV), and 635–694 (GDKG…VGAS). An N-linked (GlcNAc...) asparagine; by host glycan is attached at N442. Positions 488–687 (GEKGDKGDTG…DKGDKGDKGD (200 aa)) are enriched in basic and acidic residues. A disordered region spans residues 488–712 (GEKGDKGDTG…SPTTGENGDS (225 aa)). Over residues 703-712 (SPTTGENGDS) the composition is skewed to polar residues. N-linked (GlcNAc...) asparagine; by host glycosylation is present at N716. A disordered region spans residues 733–768 (TNIKGDKGDKGDKGDKGDKGDTGDVGLKGDTGTPGS). A compositionally biased stretch (basic and acidic residues) spans 736-754 (KGDKGDKGDKGDKGDKGDT). Positions 756–765 (DVGLKGDTGT) are enriched in low complexity.

May be hydroxylated on lysine by the viral-encoded procollagen-lysine,2-oxoglutarate 5-dioxygenase.

It is found in the virion. May participate in the formation of a layer of cross-linked glycosylated fibrils at the viral surface thus giving it a hairy-like appearance. The polypeptide is Collagen-like protein 1 (Acanthamoeba polyphaga mimivirus (APMV)).